We begin with the raw amino-acid sequence, 172 residues long: Ribosome maturation factor RimM (172 aa).

Positions 95–168 constitute a PRC barrel domain; sequence AEGEFYYHQI…RVDVEIMEGL (74 aa).

This sequence belongs to the RimM family. In terms of assembly, binds ribosomal protein uS19.

The protein resides in the cytoplasm. In terms of biological role, an accessory protein needed during the final step in the assembly of 30S ribosomal subunit, possibly for assembly of the head region. Essential for efficient processing of 16S rRNA. May be needed both before and after RbfA during the maturation of 16S rRNA. It has affinity for free ribosomal 30S subunits but not for 70S ribosomes. The protein is Ribosome maturation factor RimM of Streptococcus equi subsp. equi (strain 4047).